We begin with the raw amino-acid sequence, 671 residues long: Acetyl-coenzyme A synthetase (671 aa).

Positions methionine 1–glycine 21 are disordered. Residues arginine 221–lysine 224, threonine 339, and asparagine 363 contribute to the CoA site. ATP-binding positions include glycine 415–glycine 417, aspartate 439–threonine 444, aspartate 528, and arginine 543. Residue serine 551 coordinates CoA. Arginine 554 provides a ligand contact to ATP. 3 residues coordinate Mg(2+): valine 565, histidine 567, and valine 570. Position 611 (arginine 611) interacts with CoA. Lysine 636 carries the post-translational modification N6-acetyllysine.

It belongs to the ATP-dependent AMP-binding enzyme family. The cofactor is Mg(2+). Post-translationally, acetylated. Deacetylation by the SIR2-homolog deacetylase activates the enzyme.

It carries out the reaction acetate + ATP + CoA = acetyl-CoA + AMP + diphosphate. Catalyzes the conversion of acetate into acetyl-CoA (AcCoA), an essential intermediate at the junction of anabolic and catabolic pathways. AcsA undergoes a two-step reaction. In the first half reaction, AcsA combines acetate with ATP to form acetyl-adenylate (AcAMP) intermediate. In the second half reaction, it can then transfer the acetyl group from AcAMP to the sulfhydryl group of CoA, forming the product AcCoA. This Rhodopirellula baltica (strain DSM 10527 / NCIMB 13988 / SH1) protein is Acetyl-coenzyme A synthetase.